Here is a 712-residue protein sequence, read N- to C-terminus: TIR domain-containing adapter molecule 1 (712 aa).

The TRIF-NTD stretch occupies residues 1-153 (MACTGPSLPS…CGWDIAGDPG (153 aa)). Positions 84 to 91 (EDPEEPPD) match the TRAF6-binding motif. The pLxIS motif motif lies at 207-210 (LEIS). Serine 210 carries the post-translational modification Phosphoserine; by TBK1. 2 disordered regions span residues 216-316 (PFLS…SLPL) and 336-384 (LSVE…LFPS). Residue lysine 229 forms a Glycyl lysine isopeptide (Lys-Gly) (interchain with G-Cter in ubiquitin) linkage. A TRAF6-binding motif is present at residues 248–255 (QEPEEMSW). Over residues 265–275 (PELPSSPPPGL) the composition is skewed to pro residues. The TRAF6-binding motif lies at 299–309 (NYPVECTEGSA). The segment covering 347–369 (KPCPPTPTTPETSPPPPPPPPSS) has biased composition (pro residues). Positions 393–553 (KFYNFVILHA…QDTRALREQS (161 aa)) constitute a TIR domain. Positions 512–712 (RLDEHSQIFA…APEDKTQEAE (201 aa)) are sufficient to induce apoptosis. Pro residues-rich tracts occupy residues 620-633 (PFPT…PPPL) and 640-649 (TPPPPSPQPA). Residues 620–677 (PFPTWPGCPQPPPLHAWQAGTPPPPSPQPAAFPQSLPFPQSPAFPTASPAPPQSPGLQ) are disordered. Over residues 650 to 666 (AFPQSLPFPQSPAFPTA) the composition is skewed to low complexity.

As to quaternary structure, homodimer. Found in a multi-helicase-TICAM1 complex at least composed of DHX36, DDX1, DDX21 and TICAM1; this complex exists in resting cells with or without poly(I:C) RNA ligand stimulation. Interacts (via TIR domain) with DDX21 (via C-terminus). Interacts (via TIR domain) with DHX36 (via C-terminus). Interacts with AZI2 and IRF7. Interacts with TICAM2 in TLR4 recruitment. Interaction with PIAS4 inhibits the TICAM1-induced NF-kappa-B, IRF and IFNB1 activation. Interacts with IKBKB and IKBKE. Interaction with SARM1 blocks TICAM1-dependent transcription factor activation. Interacts with TRAF3. Interacts (when phosphorylated) with IRF3; following activation and phosphorylation on the pLxIS motif by TBK1, recruits IRF3. Interacts with TBK1, TRAF6 and RIPK1 and these interactions are enhanced in the presence of WDFY1. Interacts with TRAFD1. Interacts with UBQLN1 (via UBA domain). Interacts with TLR4. Interacts with WDFY1 in response to poly(I:C). Interacts (via the TIR domain) with TLR3 in response to poly(I:C) and this interaction is enhanced in the presence of WDFY1. Interacts with TRIM56. Component of a multi-helicase-TICAM1 complex that acts as a cytoplasmic sensor of viral double-stranded RNA (dsRNA) and plays a role in the activation of a cascade of antiviral responses including the induction of pro-inflammatory cytokines. Interacts (via the TIR domain) with TLR5. Interacts with TRIM8. Interacts with TAX1BP1 and TRIM32; these interactions target TICAM1 to TAX1BP1-mediated selective autophagic degradation. Interacts with DDX50. In terms of assembly, (Microbial infection) Interacts with hepatitis C virus (HCV) NS3/4A protease; this interaction leads to TICAM1 cleavage, thereby disrupting TLR3 signaling and preventing the establishment of an antiviral state. (Microbial infection) Interacts with Seneca Valley virus protease 3C; this interaction allows the cleavage of TICAM1/TRIF and subsequent suppression of host innate immunity. As to quaternary structure, (Microbial infection) Interacts (via C-terminus) with coxsackievirus B3 (CVB3) protease 3C. Post-translationally, phosphorylated by TBK1. Following activation, phosphorylated by TBK1 at Ser-210 in the pLxIS motif. The phosphorylated pLxIS motif constitutes an IRF3-binding motif, leading to recruitment of the transcription factor IRF3 to induce type-I interferons and other cytokines. Polyubiquitinated at Lys-229 by TRIM38 with 'Lys-48'-linked chains, leading to proteasomal degradation. Polyubiquitinated with 'Lys-6'- and 'Lys-33'-linked chains in a TRIM8-dependent manner; ubiquitination disrupts the interaction with TBK1 and subsequent interferon production. In terms of processing, (Microbial infection) Cleaved and degraded by hepatitis A virus (HAV) protein 3CD allowing the virus to disrupt host TLR3 signaling. Post-translationally, (Microbial infection) Cleaved by CVB3 protease 3C allowing the virus to disrupt host TLR3 signaling. (Microbial infection) Cleaved by Seneca Valley virus protease 3C allowing the virus to disrupt host TLR3 signaling. In terms of processing, (Microbial infection) Cleaved by protease 3C of human enterovirus D68 (EV68) allowing the virus to disrupt host TLR3 signaling. Post-translationally, (Microbial infection) Cleaved by HCV protease NS3/4A, thereby disrupting TLR3 signaling and preventing the establishment of an antiviral state. As to expression, ubiquitously expressed but with higher levels in liver.

The protein localises to the cytoplasmic vesicle. Its subcellular location is the autophagosome. The protein resides in the cytoplasm. It is found in the cytosol. It localises to the mitochondrion. Involved in innate immunity against invading pathogens. Adapter used by TLR3, TLR4 (through TICAM2) and TLR5 to mediate NF-kappa-B and interferon-regulatory factor (IRF) activation, and to induce apoptosis. Ligand binding to these receptors results in TRIF recruitment through its TIR domain. Distinct protein-interaction motifs allow recruitment of the effector proteins TBK1, TRAF6 and RIPK1, which in turn, lead to the activation of transcription factors IRF3 and IRF7, NF-kappa-B and FADD respectively. Phosphorylation by TBK1 on the pLxIS motif leads to recruitment and subsequent activation of the transcription factor IRF3 to induce expression of type I interferon and exert a potent immunity against invading pathogens. Component of a multi-helicase-TICAM1 complex that acts as a cytoplasmic sensor of viral double-stranded RNA (dsRNA) and plays a role in the activation of a cascade of antiviral responses including the induction of pro-inflammatory cytokines. The sequence is that of TIR domain-containing adapter molecule 1 (TICAM1) from Homo sapiens (Human).